A 182-amino-acid chain; its full sequence is UPF0200 protein Mboo_1593 (182 aa).

8–15 provides a ligand contact to ATP; it reads GLPASGKG.

The protein belongs to the UPF0200 family.

This Methanoregula boonei (strain DSM 21154 / JCM 14090 / 6A8) protein is UPF0200 protein Mboo_1593.